A 240-amino-acid polypeptide reads, in one-letter code: Large ribosomal subunit protein uL2 (240 aa).

The interval 199–240 (DHPFGGGGRQHPGRPKSVSRDAAPGRKVGDIASKRTGRGGNE) is disordered. Residues 221 to 231 (APGRKVGDIAS) show a composition bias toward basic and acidic residues.

Belongs to the universal ribosomal protein uL2 family. In terms of assembly, part of the 50S ribosomal subunit. Forms a bridge to the 30S subunit in the 70S ribosome.

In terms of biological role, one of the primary rRNA binding proteins. Required for association of the 30S and 50S subunits to form the 70S ribosome, for tRNA binding and peptide bond formation. It has been suggested to have peptidyltransferase activity; this is somewhat controversial. Makes several contacts with the 16S rRNA in the 70S ribosome. The chain is Large ribosomal subunit protein uL2 from Halobacterium salinarum (strain ATCC 29341 / DSM 671 / R1).